Consider the following 197-residue polypeptide: 3-isopropylmalate dehydratase small subunit (197 aa).

This sequence belongs to the LeuD family. LeuD type 1 subfamily. As to quaternary structure, heterodimer of LeuC and LeuD.

It catalyses the reaction (2R,3S)-3-isopropylmalate = (2S)-2-isopropylmalate. The protein operates within amino-acid biosynthesis; L-leucine biosynthesis; L-leucine from 3-methyl-2-oxobutanoate: step 2/4. Functionally, catalyzes the isomerization between 2-isopropylmalate and 3-isopropylmalate, via the formation of 2-isopropylmaleate. In Geobacillus sp. (strain WCH70), this protein is 3-isopropylmalate dehydratase small subunit.